We begin with the raw amino-acid sequence, 258 residues long: Octanoyltransferase (258 aa).

One can recognise a BPL/LPL catalytic domain in the interval 42 to 226 (NVGTDTLLLL…AVVAALDGEL (185 aa)). Substrate is bound by residues 80-87 (RGGKITWH), 156-158 (AIG), and 169-171 (GFS). Cysteine 187 acts as the Acyl-thioester intermediate in catalysis.

It belongs to the LipB family.

It localises to the cytoplasm. It carries out the reaction octanoyl-[ACP] + L-lysyl-[protein] = N(6)-octanoyl-L-lysyl-[protein] + holo-[ACP] + H(+). The protein operates within protein modification; protein lipoylation via endogenous pathway; protein N(6)-(lipoyl)lysine from octanoyl-[acyl-carrier-protein]: step 1/2. In terms of biological role, catalyzes the transfer of endogenously produced octanoic acid from octanoyl-acyl-carrier-protein onto the lipoyl domains of lipoate-dependent enzymes. Lipoyl-ACP can also act as a substrate although octanoyl-ACP is likely to be the physiological substrate. In Rhodococcus jostii (strain RHA1), this protein is Octanoyltransferase.